The primary structure comprises 359 residues: Type II methyltransferase M.HinfI (359 aa).

In terms of domain architecture, RAMA spans 275 to 358 (KVPMKTLIEA…LDSLRYEYTN (84 aa)).

The protein belongs to the N(4)/N(6)-methyltransferase family.

It catalyses the reaction a 2'-deoxyadenosine in DNA + S-adenosyl-L-methionine = an N(6)-methyl-2'-deoxyadenosine in DNA + S-adenosyl-L-homocysteine + H(+). In terms of biological role, a beta subtype methylase that recognizes the double-stranded sequence 5'-GANTC-3', methylates A-2 on both strands, and protects the DNA from cleavage by the HinfI endonuclease. This is Type II methyltransferase M.HinfI (hinfIM) from Haemophilus influenzae.